The primary structure comprises 468 residues: E3 ubiquitin-protein ligase RGLG2 (468 aa).

Residues 1–89 (MGTGNSKENW…PSQSYGSDNK (89 aa)) form a disordered region. Gly2 carries N-myristoyl glycine lipidation. Over residues 12-45 (QSSFRSTSASSASPSSSSWASQQSYPQYGAESYN) the composition is skewed to low complexity. The span at 46–65 (YPPPPSYAQPPEYTQPPPPL) shows a compositional bias: pro residues. A compositionally biased stretch (low complexity) spans 66-84 (YSTQPYSAPSYSAPPSQSY). Positions 122-342 (NLIVGIDFTK…KETEFALSAL (221 aa)) constitute a VWFA domain. A disordered region spans residues 369-416 (FPLPPPMRGGSSSYNSPKPSRLPSFKPSVPPHPTEGYHVRSSPVPPPT). Residues 425 to 458 (CPICLSNPKDMAFGCGHQTCCECGPDLQMCPICR) form an RING-type zinc finger.

Interacts with the heterodimer UBC35/UEV1B, UBC35 alone, PIN1, but not with UCB2, UCB9, UEV1B or UEV1C alone. Interacts with ERF053. Post-translationally, N-myristoylated. In terms of tissue distribution, ubiquitously expressed.

The protein resides in the cell membrane. Its subcellular location is the nucleus. The catalysed reaction is S-ubiquitinyl-[E2 ubiquitin-conjugating enzyme]-L-cysteine + [acceptor protein]-L-lysine = [E2 ubiquitin-conjugating enzyme]-L-cysteine + N(6)-ubiquitinyl-[acceptor protein]-L-lysine.. In terms of biological role, E3 ubiquitin-protein ligase that mediates the formation of 'Lys-63'-linked ubiquitin chains. Regulates apical dominance by acting on the auxin transport proteins abundance. Mediates ubiquitination and subsequent proteasomal degradation of ERF053 in response to drought stress. Acts as a negative regulator of drought stress response. The sequence is that of E3 ubiquitin-protein ligase RGLG2 from Arabidopsis thaliana (Mouse-ear cress).